Here is a 666-residue protein sequence, read N- to C-terminus: Neurexin-2-beta (666 aa).

A compositionally biased stretch (gly residues) spans 1 to 10 (MPPGGSGPGG). The disordered stretch occupies residues 1-30 (MPPGGSGPGGCPRRPPALAGPLPPPPPPPP). Positions 1-50 (MPPGGSGPGGCPRRPPALAGPLPPPPPPPPPPLLPLLPLLLLLLLGAAEG) are cleaved as a signal peptide. Residues 21–30 (PLPPPPPPPP) show a composition bias toward pro residues. Residues 51 to 590 (ARVSSSLSTT…EVIRESSSTT (540 aa)) lie on the Extracellular side of the membrane. Residues 91-299 (TTYIFGKGGA…HLRLVGEGPS (209 aa)) enclose the Laminin G-like domain. Ca(2+)-binding residues include aspartate 143 and valine 160. Asparagine 190 carries an N-linked (GlcNAc...) asparagine glycan. Positions 242 and 244 each coordinate Ca(2+). The segment at 327-346 (ATTTTRRGRSPTLRDSTTQN) is disordered. An O-linked (Xyl...) (heparan sulfate) serine glycan is attached at serine 354. Disordered regions lie at residues 412–443 (ATQD…CEEP) and 479–580 (TLLS…PGAV). Residues 591-611 (GMVVGIVAAAALCILILLYAM) traverse the membrane as a helical segment. Over 612 to 666 (YKYRNRDEGSYQVDQSRNYISNSAQSNGAVVKEKAPAAPKTPSKAKKNKDKEYYV) the chain is Cytoplasmic. The interval 633-666 (NSAQSNGAVVKEKAPAAPKTPSKAKKNKDKEYYV) is disordered.

Belongs to the neurexin family. As to quaternary structure, interacts (via cytoplasmic C-terminal region) with CASK. Specific isoforms bind alpha-dystroglycan and neuroligins NLGN1, NLGN2 and NLGN3. Interacts with CBLN1, CBLN2 and, less avidly, with CBLN4. Interacts with CLSTN3. Post-translationally, O-glycosylated; contains heparan sulfate. Heparan sulfate attachment is required for synapse development by mediating interactions with neuroligins.

The protein resides in the presynaptic cell membrane. Neuronal cell surface protein that may be involved in cell recognition and cell adhesion. The protein is Neurexin-2-beta (NRXN2) of Homo sapiens (Human).